Consider the following 622-residue polypeptide: Leucine-rich repeat-containing protein 70 (622 aa).

An N-terminal signal peptide occupies residues 1 to 31 (MCGLQFSLPCLRLFLVVTCYLLLLLHKEILG). An LRRNT domain is found at 32 to 60 (CSSVCQLCTGRQINCRNLGLSSIPKNFPE). LRR repeat units follow at residues 61-82 (STVF…ELTG), 85-106 (SLVA…AFVQ), 109-130 (HLYF…IFKG), 133-154 (NLRN…VFND), 157-178 (SVQY…TFVG), 181-202 (ALRI…GFQH), 205-226 (NLAC…AFEV), 229-250 (SLRR…AFKG), 253-274 (NLEY…GFSG), 277-298 (NLKH…TFSL), 301-322 (NLIY…TFEN), and 326-347 (SLKI…VLKP). Asn215 carries N-linked (GlcNAc...) asparagine glycosylation. An N-linked (GlcNAc...) asparagine glycan is attached at Asn266. N-linked (GlcNAc...) asparagine glycosylation is found at Asn331 and Asn400. An LRRCT domain is found at 359–406 (NPWECNCKLLGLRDWLASSAITLNIYCQNPPSMRGRALRYINITNCVT). Residues 527–547 (AFDILLAFFILACVLIIFLIY) form a helical membrane-spanning segment.

Expressed at low levels in many tissues, including smooth muscle, brain, uterus, pancreas, cartilage, adipose, spleen and testis.

It is found in the membrane. In terms of biological role, renders cells highly sensitive to the activation by cytokines and lipopolysaccharide (LPS). The protein is Leucine-rich repeat-containing protein 70 (LRRC70) of Homo sapiens (Human).